The sequence spans 150 residues: Small ribosomal subunit protein bS6 (150 aa).

The tract at residues Lys-92–Lys-150 is disordered. The segment covering Ala-98–Val-109 has biased composition (basic residues). Residues Phe-113–Arg-129 are compositionally biased toward basic and acidic residues. Residues Thr-132–Ser-141 show a composition bias toward low complexity.

This sequence belongs to the bacterial ribosomal protein bS6 family.

Binds together with bS18 to 16S ribosomal RNA. The chain is Small ribosomal subunit protein bS6 from Mycoplasmopsis pulmonis (strain UAB CTIP) (Mycoplasma pulmonis).